The chain runs to 608 residues: Glutamyl-tRNA(Gln) amidotransferase subunit E (608 aa).

The disordered stretch occupies residues glutamate 402 to alanine 422.

This sequence belongs to the GatB/GatE family. GatE subfamily. In terms of assembly, heterodimer of GatD and GatE.

The catalysed reaction is L-glutamyl-tRNA(Gln) + L-glutamine + ATP + H2O = L-glutaminyl-tRNA(Gln) + L-glutamate + ADP + phosphate + H(+). Its function is as follows. Allows the formation of correctly charged Gln-tRNA(Gln) through the transamidation of misacylated Glu-tRNA(Gln) in organisms which lack glutaminyl-tRNA synthetase. The reaction takes place in the presence of glutamine and ATP through an activated gamma-phospho-Glu-tRNA(Gln). The GatDE system is specific for glutamate and does not act on aspartate. The polypeptide is Glutamyl-tRNA(Gln) amidotransferase subunit E (Pyrobaculum calidifontis (strain DSM 21063 / JCM 11548 / VA1)).